Consider the following 141-residue polypeptide: Meiotically up-regulated gene 118 protein (141 aa).

Positions 106 to 115 are enriched in polar residues; the sequence is LSSQKSARQP. Positions 106–141 are disordered; it reads LSSQKSARQPTKTVASSSSSSSKSTTVSKSSSKSQV. A compositionally biased stretch (low complexity) spans 116–141; the sequence is TKTVASSSSSSSKSTTVSKSSSKSQV.

The protein localises to the nucleus. In terms of biological role, has a role in meiosis. The protein is Meiotically up-regulated gene 118 protein (mug118) of Schizosaccharomyces pombe (strain 972 / ATCC 24843) (Fission yeast).